A 129-amino-acid chain; its full sequence is Small ribosomal subunit protein uS11 (129 aa).

The protein belongs to the universal ribosomal protein uS11 family. In terms of assembly, part of the 30S ribosomal subunit. Interacts with proteins S7 and S18. Binds to IF-3.

Its function is as follows. Located on the platform of the 30S subunit, it bridges several disparate RNA helices of the 16S rRNA. Forms part of the Shine-Dalgarno cleft in the 70S ribosome. The polypeptide is Small ribosomal subunit protein uS11 (Methylobacillus flagellatus (strain ATCC 51484 / DSM 6875 / VKM B-1610 / KT)).